The following is a 320-amino-acid chain: Foldase protein PrsA (320 aa).

The first 20 residues, 1–20, serve as a signal peptide directing secretion; the sequence is MKMINKLIVPVTASALLLGA. Cys21 is lipidated: N-palmitoyl cysteine. Cys21 carries the S-diacylglycerol cysteine lipid modification. The PpiC domain occupies 139 to 245; sequence EDSKKASHIL…FGYHIIKADK (107 aa). Residues 159 to 198 are disordered; it reads EGLDDKEAKQKAEEIQKEVSKDPSKFGEIAKKESMDTGSA.

Belongs to the PrsA family.

It is found in the cell membrane. It carries out the reaction [protein]-peptidylproline (omega=180) = [protein]-peptidylproline (omega=0). Plays a major role in protein secretion by helping the post-translocational extracellular folding of several secreted proteins. The chain is Foldase protein PrsA from Staphylococcus aureus (strain Mu3 / ATCC 700698).